Consider the following 525-residue polypeptide: Eukaryotic translation initiation factor 3 subunit L (525 aa).

The span at 1–19 (MYTQADEYDGGDAGYEDDY) shows a compositional bias: acidic residues. The tract at residues 1-21 (MYTQADEYDGGDAGYEDDYSG) is disordered. Positions 296–502 (DAIRCFSSVL…IHIADTKVDR (207 aa)) constitute a PCI domain.

Belongs to the eIF-3 subunit L family. In terms of assembly, component of the eukaryotic translation initiation factor 3 (eIF-3) complex.

It localises to the cytoplasm. Its function is as follows. Component of the eukaryotic translation initiation factor 3 (eIF-3) complex, which is involved in protein synthesis of a specialized repertoire of mRNAs and, together with other initiation factors, stimulates binding of mRNA and methionyl-tRNAi to the 40S ribosome. The eIF-3 complex specifically targets and initiates translation of a subset of mRNAs involved in cell proliferation. The protein is Eukaryotic translation initiation factor 3 subunit L of Nematostella vectensis (Starlet sea anemone).